The primary structure comprises 1023 residues: Probable histidine kinase 3 (1023 aa).

The Cytoplasmic segment spans residues M1–W80. A helical membrane pass occupies residues W81–F101. Residues M102 to P387 lie on the Extracellular side of the membrane. The region spanning T151–G352 is the CHASE domain. The helical transmembrane segment at W388–F408 threads the bilayer. The Cytoplasmic segment spans residues Q409–E1023. Residues T445–R715 enclose the Histidine kinase domain. Position 448 is a phosphohistidine; by autocatalysis (H448). Response regulatory domains follow at residues N732–L854 and Q880–F1016. The residue at position 783 (D783) is a 4-aspartylphosphate. Residues L812–E831 are disordered. Positions S817 to D827 are enriched in polar residues. D930 is modified (4-aspartylphosphate).

Post-translationally, activation probably requires a transfer of a phosphate group between a His in the transmitter domain and an Asp of the receiver domain. In terms of tissue distribution, highly expressed in young leaves and at lower levels in roots, mature leaves, stems and spikelets.

It localises to the cell membrane. The enzyme catalyses ATP + protein L-histidine = ADP + protein N-phospho-L-histidine.. Its function is as follows. Cytokinin receptor related to bacterial two-component regulators. Functions as a histidine kinase and transmits the stress signal to a downstream MAPK cascade. The chain is Probable histidine kinase 3 from Oryza sativa subsp. japonica (Rice).